Consider the following 187-residue polypeptide: UPF0301 protein ETA_28320 (187 aa).

It belongs to the UPF0301 (AlgH) family.

The chain is UPF0301 protein ETA_28320 from Erwinia tasmaniensis (strain DSM 17950 / CFBP 7177 / CIP 109463 / NCPPB 4357 / Et1/99).